The sequence spans 210 residues: Putative 3-methyladenine DNA glycosylase (210 aa).

The segment at 180-210 is disordered; sequence SRPPPGAAAARAARAPAAPAPRPRRPRGSGP. A compositionally biased stretch (low complexity) spans 186–196; the sequence is AAAARAARAPA. A compositionally biased stretch (basic residues) spans 201-210; it reads RPRRPRGSGP.

Belongs to the DNA glycosylase MPG family.

The polypeptide is Putative 3-methyladenine DNA glycosylase (Anaeromyxobacter dehalogenans (strain 2CP-1 / ATCC BAA-258)).